A 432-amino-acid chain; its full sequence is Amino-acid acetyltransferase (432 aa).

Residues 286–425 enclose the N-acetyltransferase domain; it reads EKLREATIED…ASLYNYQRQS (140 aa).

This sequence belongs to the acetyltransferase family. ArgA subfamily.

The protein localises to the cytoplasm. The enzyme catalyses L-glutamate + acetyl-CoA = N-acetyl-L-glutamate + CoA + H(+). The protein operates within amino-acid biosynthesis; L-arginine biosynthesis; N(2)-acetyl-L-ornithine from L-glutamate: step 1/4. The protein is Amino-acid acetyltransferase of Azotobacter vinelandii (strain DJ / ATCC BAA-1303).